Here is a 433-residue protein sequence, read N- to C-terminus: D-amino acid dehydrogenase (433 aa).

Residue 3–17 (VVILGSGVVGVASAW) participates in FAD binding.

Belongs to the DadA oxidoreductase family. Requires FAD as cofactor.

The enzyme catalyses a D-alpha-amino acid + A + H2O = a 2-oxocarboxylate + AH2 + NH4(+). Its pathway is amino-acid degradation; D-alanine degradation; NH(3) and pyruvate from D-alanine: step 1/1. Oxidative deamination of D-amino acids. In Erwinia tasmaniensis (strain DSM 17950 / CFBP 7177 / CIP 109463 / NCPPB 4357 / Et1/99), this protein is D-amino acid dehydrogenase.